Here is a 213-residue protein sequence, read N- to C-terminus: NADH dehydrogenase [ubiquinone] iron-sulfur protein 7, mitochondrial (213 aa).

Residues 1–38 (MAALSAPGLCGFRILGLRSSVGTAVQARGVHQSVATDG) constitute a mitochondrion transit peptide. The segment at 32 to 53 (QSVATDGPSSTQPALPKARAVA) is disordered. The span at 33-44 (SVATDGPSSTQP) shows a compositional bias: polar residues. [4Fe-4S] cluster is bound by residues Cys88 and Cys89. Arg111 is subject to Hydroxyarginine. [4Fe-4S] cluster-binding residues include Cys153 and Cys183.

This sequence belongs to the complex I 20 kDa subunit family. As to quaternary structure, core subunit of respiratory chain NADH dehydrogenase (Complex I) which is composed of 45 different subunits. This is a component of the iron-sulfur (IP) fragment of the enzyme. It depends on [4Fe-4S] cluster as a cofactor. Post-translationally, hydroxylated ar Arg-111 by NDUFAF5 early in the pathway of assembly of complex I, before the formation of the juncture between peripheral and membrane arms.

The protein resides in the mitochondrion inner membrane. It catalyses the reaction a ubiquinone + NADH + 5 H(+)(in) = a ubiquinol + NAD(+) + 4 H(+)(out). Its function is as follows. Core subunit of the mitochondrial membrane respiratory chain NADH dehydrogenase (Complex I) which catalyzes electron transfer from NADH through the respiratory chain, using ubiquinone as an electron acceptor. Essential for the catalytic activity of complex I. The chain is NADH dehydrogenase [ubiquinone] iron-sulfur protein 7, mitochondrial (NDUFS7) from Gorilla gorilla gorilla (Western lowland gorilla).